A 424-amino-acid polypeptide reads, in one-letter code: Isoflavipucine cluster transcription factor ATEG_00326 (424 aa).

Residues 10–38 (CDRCHGQKLRCIHSGGGPCVRCAKAKATC) constitute a DNA-binding region (zn(2)-C6 fungal-type). Residues 265 to 286 (ARMQTPEGTPERTSESSPSGPP) are disordered.

The protein localises to the nucleus. In terms of biological role, transcription factor that regulates the expression of the gene cluster that mediates the biosynthesis of isoflavipucine. In Aspergillus terreus (strain NIH 2624 / FGSC A1156), this protein is Isoflavipucine cluster transcription factor ATEG_00326.